Here is a 381-residue protein sequence, read N- to C-terminus: Homoserine O-succinyltransferase (381 aa).

One can recognise an AB hydrolase-1 domain in the interval 45–360 (NAVLVCHALN…PHGHDAFLLD (316 aa)). Ser151 acts as the Nucleophile in catalysis. Position 221 (Arg221) interacts with substrate. Residues Asp321 and His354 contribute to the active site. Residue Asp355 participates in substrate binding.

This sequence belongs to the AB hydrolase superfamily. MetX family. In terms of assembly, homodimer.

Its subcellular location is the cytoplasm. The catalysed reaction is L-homoserine + succinyl-CoA = O-succinyl-L-homoserine + CoA. It participates in amino-acid biosynthesis; L-methionine biosynthesis via de novo pathway; O-succinyl-L-homoserine from L-homoserine: step 1/1. In terms of biological role, transfers a succinyl group from succinyl-CoA to L-homoserine, forming succinyl-L-homoserine. This chain is Homoserine O-succinyltransferase, found in Paraburkholderia xenovorans (strain LB400).